Consider the following 417-residue polypeptide: CinA-like protein (417 aa).

Belongs to the CinA family.

This is CinA-like protein from Gloeothece citriformis (strain PCC 7424) (Cyanothece sp. (strain PCC 7424)).